We begin with the raw amino-acid sequence, 298 residues long: RNA exonuclease 4 (298 aa).

Residues 1-73 (MRKTVRKNKQ…EAKLKLKSAT (73 aa)) adopt a coiled-coil conformation. One can recognise an Exonuclease domain in the interval 125-275 (FFSIDCKIIE…RDTIINVILY (151 aa)).

This sequence belongs to the REXO4 family.

It localises to the nucleus. This Dictyostelium discoideum (Social amoeba) protein is RNA exonuclease 4 (rexo4).